The sequence spans 317 residues: MPKLKLIGVDLGGTTFSVGLVSEDGKILKKVTRDTLVENGKEDVIRRIAETILEVSDGEEAPYVGIGSPGSIDRENGIVRFSPNFPDWHNVPLTDELAKRTGKKVFLENDANAFVLGEKWFGAGRGHDHIVALTLGTGIGGGVVTHGYLLTGRDGIGAELGHVVVEPNGPMCNCGTRGCLEAVASATAIRRFLREGYKKYHSSLVYKLAGSPEKADAKHLFDAARQGDRFALMIRDRVVDALARAVAGYIHIFNPEIVIIGGGISRAGEILFGPLREKVVDYIMPSFVGTYEVVASPLVEDAGILGAASIIKERIGG.

The protein belongs to the ROK (NagC/XylR) family. As to quaternary structure, homodimer. Requires a divalent metal cation as cofactor.

The enzyme catalyses D-glucose + ATP = D-glucose 6-phosphate + ADP + H(+). Its function is as follows. Catalyzes the phosphorylation of D-glucose to D-glucose 6-phosphate using ATP as the phosphate donor. Can also phosphorylate 2-deoxyglucose, with lower efficiency. ITP can also serve as a phosphoryl donor. The polypeptide is Glucokinase (Thermotoga maritima (strain ATCC 43589 / DSM 3109 / JCM 10099 / NBRC 100826 / MSB8)).